The sequence spans 230 residues: Sperm-associated antigen 7 homolog (230 aa).

A disordered region spans residues 1 to 45; it reads MADLLGSILSSMEKPPTVHDQESRRKAREQAARLKKLEEDERRKK. A compositionally biased stretch (basic and acidic residues) spans 16–45; the sequence is PTVHDQESRRKAREQAARLKKLEEDERRKK. The R3H domain maps to 46–109; sequence AEFRKKMEKE…ESRYVMLFKK (64 aa). Residues 119-144 are compositionally biased toward basic and acidic residues; the sequence is EAYRKGEEWDPQKAEERRRLKEKAAL. 2 disordered regions span residues 119–169 and 185–230; these read EAYR…KYSH and ANRA…GSSV. Residue Ser-158 is modified to Phosphoserine. A compositionally biased stretch (basic and acidic residues) spans 196–211; it reads NKRDTRSIEEAMNEIR.

In Danio rerio (Zebrafish), this protein is Sperm-associated antigen 7 homolog (spag7).